A 166-amino-acid chain; its full sequence is Phosphopantetheine adenylyltransferase (166 aa).

Substrate is bound at residue T11. Residues T11–F12 and H19 contribute to the ATP site. Residues K43, T79, and R93 each coordinate substrate. Residues E104 and L128–T134 each bind ATP.

Belongs to the bacterial CoaD family. As to quaternary structure, homohexamer. It depends on Mg(2+) as a cofactor.

It localises to the cytoplasm. The catalysed reaction is (R)-4'-phosphopantetheine + ATP + H(+) = 3'-dephospho-CoA + diphosphate. It functions in the pathway cofactor biosynthesis; coenzyme A biosynthesis; CoA from (R)-pantothenate: step 4/5. Its function is as follows. Reversibly transfers an adenylyl group from ATP to 4'-phosphopantetheine, yielding dephospho-CoA (dPCoA) and pyrophosphate. The polypeptide is Phosphopantetheine adenylyltransferase (Lactococcus lactis subsp. cremoris (strain MG1363)).